The chain runs to 51 residues: Large ribosomal subunit protein eL39 (51 aa).

Belongs to the eukaryotic ribosomal protein eL39 family.

The protein is Large ribosomal subunit protein eL39 of Thermococcus onnurineus (strain NA1).